Consider the following 95-residue polypeptide: Large ribosomal subunit protein bL28 (95 aa).

Belongs to the bacterial ribosomal protein bL28 family.

In Dinoroseobacter shibae (strain DSM 16493 / NCIMB 14021 / DFL 12), this protein is Large ribosomal subunit protein bL28.